Consider the following 215-residue polypeptide: Thiamine-phosphate synthase (215 aa).

Residues 42-46 (QYREK) and Asp77 each bind 4-amino-2-methyl-5-(diphosphooxymethyl)pyrimidine. Mg(2+)-binding residues include Asp78 and Asp97. 4-amino-2-methyl-5-(diphosphooxymethyl)pyrimidine is bound at residue Ser116. 143 to 145 (TKS) provides a ligand contact to 2-[(2R,5Z)-2-carboxy-4-methylthiazol-5(2H)-ylidene]ethyl phosphate. Residue Lys146 participates in 4-amino-2-methyl-5-(diphosphooxymethyl)pyrimidine binding. Residues Gly174 and 194-195 (IS) each bind 2-[(2R,5Z)-2-carboxy-4-methylthiazol-5(2H)-ylidene]ethyl phosphate.

This sequence belongs to the thiamine-phosphate synthase family. Mg(2+) is required as a cofactor.

The catalysed reaction is 2-[(2R,5Z)-2-carboxy-4-methylthiazol-5(2H)-ylidene]ethyl phosphate + 4-amino-2-methyl-5-(diphosphooxymethyl)pyrimidine + 2 H(+) = thiamine phosphate + CO2 + diphosphate. The enzyme catalyses 2-(2-carboxy-4-methylthiazol-5-yl)ethyl phosphate + 4-amino-2-methyl-5-(diphosphooxymethyl)pyrimidine + 2 H(+) = thiamine phosphate + CO2 + diphosphate. It catalyses the reaction 4-methyl-5-(2-phosphooxyethyl)-thiazole + 4-amino-2-methyl-5-(diphosphooxymethyl)pyrimidine + H(+) = thiamine phosphate + diphosphate. It functions in the pathway cofactor biosynthesis; thiamine diphosphate biosynthesis; thiamine phosphate from 4-amino-2-methyl-5-diphosphomethylpyrimidine and 4-methyl-5-(2-phosphoethyl)-thiazole: step 1/1. Functionally, condenses 4-methyl-5-(beta-hydroxyethyl)thiazole monophosphate (THZ-P) and 2-methyl-4-amino-5-hydroxymethyl pyrimidine pyrophosphate (HMP-PP) to form thiamine monophosphate (TMP). The protein is Thiamine-phosphate synthase of Limosilactobacillus reuteri (strain DSM 20016) (Lactobacillus reuteri).